The following is a 133-amino-acid chain: Interleukin-4 (133 aa).

Residues 1–24 form the signal peptide; the sequence is MGLTSQLIPTLVCLLACTSNFVHG. 3 disulfide bridges follow: cysteine 27–cysteine 133, cysteine 48–cysteine 85, and cysteine 70–cysteine 105. N-linked (GlcNAc...) asparagine glycosylation is present at asparagine 62.

Belongs to the IL-4/IL-13 family.

The protein resides in the secreted. Its function is as follows. Participates in at least several B-cell activation processes as well as of other cell types. It is a costimulator of DNA-synthesis. It induces the expression of class II MHC molecules on resting B-cells. It enhances both secretion and cell surface expression of IgE and IgG1. It also regulates the expression of the low affinity Fc receptor for IgE (CD23) on both lymphocytes and monocytes. Positively regulates IL31RA expression in macrophages. Stimulates autophagy in dendritic cells by interfering with mTORC1 signaling and through the induction of RUFY4. In Sus scrofa (Pig), this protein is Interleukin-4 (IL4).